The primary structure comprises 277 residues: Inositol monophosphatase 1 (277 aa).

Glu70, Asp90, Ile92, and Asp93 together coordinate Mg(2+). Glu70 provides a ligand contact to substrate. 92–95 (IDGT) contacts substrate. A Phosphothreonine modification is found at Thr168. Substrate-binding positions include 194-196 (GTA), Glu213, and Asp220. Asp220 is a binding site for Mg(2+).

It belongs to the inositol monophosphatase superfamily. In terms of assembly, homodimer. The cofactor is Mg(2+). In terms of processing, the N-terminus is blocked.

The protein localises to the cytoplasm. The enzyme catalyses a myo-inositol phosphate + H2O = myo-inositol + phosphate. The catalysed reaction is 1D-myo-inositol 1-phosphate + H2O = myo-inositol + phosphate. It catalyses the reaction 1D-myo-inositol 2-phosphate + H2O = myo-inositol + phosphate. It carries out the reaction 1D-myo-inositol 3-phosphate + H2O = myo-inositol + phosphate. The enzyme catalyses 1D-myo-inositol 4-phosphate + H2O = myo-inositol + phosphate. The catalysed reaction is 1D-myo-inositol 5-phosphate + H2O = myo-inositol + phosphate. It catalyses the reaction 1D-myo-inositol 6-phosphate + H2O = myo-inositol + phosphate. It carries out the reaction scyllo-inositol 1-phosphate + H2O = scyllo-inositol + phosphate. The enzyme catalyses alpha-D-galactose 1-phosphate + H2O = D-galactose + phosphate. The catalysed reaction is alpha-D-glucose 1-phosphate + H2O = D-glucose + phosphate. It catalyses the reaction D-glucose 6-phosphate + H2O = D-glucose + phosphate. It carries out the reaction beta-D-fructose 1-phosphate + H2O = D-fructose + phosphate. The enzyme catalyses glycerol 2-phosphate + H2O = glycerol + phosphate. The catalysed reaction is adenosine 2'-phosphate + H2O = adenosine + phosphate. It participates in polyol metabolism; myo-inositol biosynthesis; myo-inositol from D-glucose 6-phosphate: step 2/2. Activity with myo-inositol monophosphate and D-galactose 1-phosphate is inhibited by Li(+), Ca(2+) and Mn(2+), but also by Mg(2+) at concentrations above 3 mM. In terms of biological role, phosphatase involved in the dephosphorylation of myo-inositol monophosphate to generate myo-inositol. Is also able to dephosphorylate scyllo-inositol-phosphate, myo-inositol 1,4-diphosphate, scyllo-inositol-1,3-diphosphate and scyllo-inositol-1,4-diphosphate. Also dephosphorylates in vitro other sugar-phosphates including D-galactose-1-phosphate, glucose-1-phosphate, glucose-6-phosphate, fructose-1-phosphate, beta-glycerophosphate and 2'-AMP. Responsible for the provision of inositol required for synthesis of phosphatidylinositol and polyphosphoinositides, and involved in maintaining normal brain function. Has been implicated as the pharmacological target for lithium Li(+) action in brain. Is equally active with myo-inositol monophosphate and D-galactose 1-phosphate. This Bos taurus (Bovine) protein is Inositol monophosphatase 1 (IMPA1).